The primary structure comprises 489 residues: Putative (R)-citramalate synthase CimA (489 aa).

A Pyruvate carboxyltransferase domain is found at 3–255; sequence VKILDTTLRD…KTKIKKERLY (253 aa).

Belongs to the alpha-IPM synthase/homocitrate synthase family. As to quaternary structure, homodimer.

The catalysed reaction is pyruvate + acetyl-CoA + H2O = (3R)-citramalate + CoA + H(+). The protein operates within amino-acid biosynthesis; L-isoleucine biosynthesis; 2-oxobutanoate from pyruvate: step 1/3. Its function is as follows. Catalyzes the condensation of pyruvate and acetyl-coenzyme A to form (R)-citramalate. This is Putative (R)-citramalate synthase CimA (cimA) from Archaeoglobus fulgidus (strain ATCC 49558 / DSM 4304 / JCM 9628 / NBRC 100126 / VC-16).